A 1068-amino-acid chain; its full sequence is Self-sufficient cytochrome P450 monooxygenase CYP505U2 (1068 aa).

Position 408 (Cys-408) interacts with heme. The tract at residues 464 to 498 (TTAGMVPESVQSLRQAQKSGKPGNSKSSANESMVG) is disordered. Positions 472-498 (SVQSLRQAQKSGKPGNSKSSANESMVG) are enriched in polar residues. Positions 505–646 (VSIFYGSNSG…DLEKWEESIL (142 aa)) constitute a Flavodoxin-like domain. FMN-binding positions include 511–515 (SNSGS) and 590–622 (VFGCGHHDWATTFYKIPILIDELLEQRGAQRVA). An FAD-binding FR-type domain is found at 679-909 (KEFLEATVTS…RRSNPAFHPP (231 aa)).

It in the N-terminal section; belongs to the cytochrome P450 family. FAD is required as a cofactor. The cofactor is FMN. Requires heme as cofactor.

The catalysed reaction is 2 oxidized [cytochrome P450] + NADPH = 2 reduced [cytochrome P450] + NADP(+) + H(+). It carries out the reaction an organic molecule + reduced [NADPH--hemoprotein reductase] + O2 = an alcohol + oxidized [NADPH--hemoprotein reductase] + H2O + H(+). It catalyses the reaction dodecanoate + reduced [NADPH--hemoprotein reductase] + O2 = 3-hydroxydodecanoate + oxidized [NADPH--hemoprotein reductase] + H2O + H(+). The enzyme catalyses dodecanoate + reduced [NADPH--hemoprotein reductase] + O2 = 7-hydroxydodecanoate + oxidized [NADPH--hemoprotein reductase] + H2O + H(+). The catalysed reaction is dodecan-1-ol + reduced [NADPH--hemoprotein reductase] + O2 = 1,4-dodecanediol + oxidized [NADPH--hemoprotein reductase] + H2O + H(+). It carries out the reaction dodecan-1-ol + reduced [NADPH--hemoprotein reductase] + O2 = 1,3-dodecanediol + oxidized [NADPH--hemoprotein reductase] + H2O + H(+). Its function is as follows. Self-sufficient cytochrome P450 monooxygenase that catalyzes the regioselective in-chain hydroxylation of alkanes, fatty alcohols, and fatty acids. Preferentially hydroxylates 1-dodecanol at C3 and C4 (positions omega-8 and omega-9). It is very likely that CYP505U2 prefers dodecanol, and probably other fatty alcohols, over fatty acids as substrates. Does not show any significant activity toward tetradecanoic acid. The polypeptide is Self-sufficient cytochrome P450 monooxygenase CYP505U2 (Exserohilum turcicum (strain 28A) (Northern leaf blight fungus)).